A 219-amino-acid polypeptide reads, in one-letter code: Putative protease Do-like 6, chloroplastic (219 aa).

Residues 1–45 (MLFRSVHHIVARFSNSTSTPIHRFFYSPSLLRRRSSFNASLISRC) constitute a chloroplast transit peptide. Positions 61–216 (KIFSFSREPN…YSGQINKKIY (156 aa)) are serine protease. Catalysis depends on charge relay system residues His-99, Asp-130, and Ser-208.

Belongs to the peptidase S1B family.

Its subcellular location is the plastid. The protein localises to the chloroplast. In terms of biological role, putative serine protease. The chain is Putative protease Do-like 6, chloroplastic (DEGP6) from Arabidopsis thaliana (Mouse-ear cress).